The primary structure comprises 312 residues: Acetyl-coenzyme A carboxylase carboxyl transferase subunit beta (312 aa).

The tract at residues 1 to 52 is disordered; it reads MEMDTAVENPAVEKNGQPTPSSTSTATDAAPTPNAPNRPAPNTAGNRKRGVP. The segment covering 18–32 has biased composition (low complexity); sequence PTPSSTSTATDAAPT. The region spanning 55 to 312 is the CoA carboxyltransferase N-terminal domain; the sequence is VWRKCDSCGA…IATAIDYCGK (258 aa). Zn(2+) contacts are provided by C59, C62, C78, and C81. The segment at 59 to 81 adopts a C4-type zinc-finger fold; the sequence is CDSCGASLFYKEVQQRLNVCPQC.

This sequence belongs to the AccD/PCCB family. As to quaternary structure, acetyl-CoA carboxylase is a heterohexamer composed of biotin carboxyl carrier protein (AccB), biotin carboxylase (AccC) and two subunits each of ACCase subunit alpha (AccA) and ACCase subunit beta (AccD). It depends on Zn(2+) as a cofactor.

The protein localises to the cytoplasm. The enzyme catalyses N(6)-carboxybiotinyl-L-lysyl-[protein] + acetyl-CoA = N(6)-biotinyl-L-lysyl-[protein] + malonyl-CoA. Its pathway is lipid metabolism; malonyl-CoA biosynthesis; malonyl-CoA from acetyl-CoA: step 1/1. Its function is as follows. Component of the acetyl coenzyme A carboxylase (ACC) complex. Biotin carboxylase (BC) catalyzes the carboxylation of biotin on its carrier protein (BCCP) and then the CO(2) group is transferred by the transcarboxylase to acetyl-CoA to form malonyl-CoA. The chain is Acetyl-coenzyme A carboxylase carboxyl transferase subunit beta from Rhodopirellula baltica (strain DSM 10527 / NCIMB 13988 / SH1).